A 346-amino-acid polypeptide reads, in one-letter code: Ribulose-5-phosphate reductase (346 aa).

4 residues coordinate Zn(2+): C45, H71, E72, and E151.

Belongs to the zinc-containing alcohol dehydrogenase family. Zn(2+) is required as a cofactor.

The enzyme catalyses D-ribitol 5-phosphate + NADP(+) = D-ribulose 5-phosphate + NADPH + H(+). It participates in cell wall biogenesis; poly(ribitol phosphate) teichoic acid biosynthesis. Functionally, catalyzes the NADPH dependent reduction of D-ribulose 5-phosphate to D-ribitol 5-phosphate. In Streptococcus pneumoniae (strain ATCC BAA-255 / R6), this protein is Ribulose-5-phosphate reductase.